We begin with the raw amino-acid sequence, 335 residues long: Autophagy-related protein 21 (335 aa).

2 WD repeats span residues Cys-165–Glu-205 and Tyr-210–Asn-249.

The protein belongs to the WD repeat PROPPIN family.

The protein localises to the cytoplasm. The protein resides in the golgi apparatus. It is found in the golgi stack membrane. It localises to the vacuole membrane. Its subcellular location is the preautophagosomal structure membrane. Required for cytoplasm to vacuole transport (Cvt) vesicles formation and autophagy. Has a role in sporulation. This chain is Autophagy-related protein 21 (mug179), found in Schizosaccharomyces pombe (strain 972 / ATCC 24843) (Fission yeast).